Here is a 109-residue protein sequence, read N- to C-terminus: Oncomodulin (109 aa).

Serine 2 carries the post-translational modification N-acetylserine. EF-hand domains follow at residues 39–74 (MSASQLKDIFQFIDNDQSGYLDEDELKYFLQRFQSD) and 78–109 (LTESETKSLMDAADNDGDGKIGADEFQEMVHS). Residues aspartate 52, aspartate 54, serine 56, tyrosine 58, glutamate 63, aspartate 91, aspartate 93, aspartate 95, lysine 97, and glutamate 102 each contribute to the Ca(2+) site. The disordered stretch occupies residues 82 to 109 (ETKSLMDAADNDGDGKIGADEFQEMVHS). Over residues 94–109 (GDGKIGADEFQEMVHS) the composition is skewed to basic and acidic residues.

Belongs to the parvalbumin family. Found in tumor tissues and not detected in normal tissues.

Functionally, has some calmodulin-like activity with respect to enzyme activation and growth regulation. Binds two calcium ions. The sequence is that of Oncomodulin (Ocm) from Mus musculus (Mouse).